Consider the following 423-residue polypeptide: Phaseolin (423 aa).

Positions arginine 1–alanine 21 are cleaved as a signal peptide. Residue asparagine 28 is glycosylated (N-linked (GlcNAc...) asparagine). Cupin type-1 domains follow at residues phenylalanine 35–asparagine 193 and lysine 228–glutamine 383. 4 N-linked (GlcNAc...) asparagine glycosylation sites follow: asparagine 243, asparagine 332, asparagine 390, and asparagine 396. A disordered region spans residues glycine 397–tyrosine 423. A compositionally biased stretch (basic residues) spans glutamine 414–tyrosine 423.

Belongs to the 7S seed storage protein family. Homotrimer.

It is found in the vacuole. The protein localises to the aleurone grain. In terms of biological role, major seed storage protein. This is Phaseolin (PHS) from Phaseolus lunatus (Lima bean).